A 790-amino-acid polypeptide reads, in one-letter code: Protein sel-1 homolog 1 (790 aa).

The N-terminal stretch at 1-21 is a signal peptide; the sequence is MQVRVRLSLLLLCAVLLGSAA. The interval 22-51 is disordered; sequence ATSDDKTNQDDSLDSKSSLPTDESVKDHTT. The Lumenal segment spans residues 22 to 734; it reads ATSDDKTNQD…LFTQLDMDQL (713 aa). The segment at 23–733 is interaction with ERLEC1, OS9 and SYVN1; that stretch reads TSDDKTNQDD…DLFTQLDMDQ (711 aa). Phosphoserine is present on Ser64. Over residues 67–78 the composition is skewed to acidic residues; the sequence is AEVESLLQDEED. The segment at 67–98 is disordered; it reads AEVESLLQDEEDSSKTQEEEISFLESPNPSSK. Residues 118-166 form the Fibronectin type-II domain; the sequence is AHGEPCHFPFLFLDKEYDECTSDGREDGRLWCATTYDYKTDEKWGFCET. 2 disulfide bridges follow: Cys123–Cys149 and Cys137–Cys164. Sel1-like repeat units lie at residues 179-214, 215-250, 251-286, 287-322, 369-405, 406-442, 443-478, 479-514, and 515-550; these read AEMIYQAGMKILNGSNRKSQKREAYRYLQKAAGMNH, TKALERVSYALLFGDYLTQNIQAAKEMFEKLTEEGS, PKGQTGLGFLYASGLGVNSSQAKALVYYTFGALGGN, LIAHMILGYRYWAGIGVLQSCESALTHYRLVANHVA, VQAQVGLGQLHLHGGRGVEQNHQRAFDYFNLAANAGN, SHAMAFLGKMYSEGSDIVPQSNETALHYFKKAADMGN, PVGQSGLGMAYLYGRGVQVNYDLALKYFQKAAEQGW, VDGQLQLGSMYYNGIGVKRDYKQALKYFNLASQGGH, and ILAFYNLAQMHASGTGVMRSCHTAVELFKNVCERGR. Asn191 and Asn213 each carry an N-linked (GlcNAc...) asparagine glycan. Residue Asn268 is glycosylated (N-linked (GlcNAc...) asparagine). An important for homodimerization and oligomerization region spans residues 348 to 533; sequence NSGMLEEDLI…MHASGTGVMR (186 aa). Asn427 carries N-linked (GlcNAc...) asparagine glycosylation. Residue Asn604 is glycosylated (N-linked (GlcNAc...) asparagine). 2 Sel1-like repeats span residues 623-658 and 660-695; these read TVARIKLGDYHFYGFGTDVDYETAFIHYRLASEQQH and AQAMFNLGYMHEKGLGIKQDIHLAKRFYDMAAEASP. The segment at 639-719 is interaction with SYVN1; the sequence is TDVDYETAFI…VVYFLQYIRE (81 aa). A mediates retention in the endoplasmic reticulum region spans residues 734-790; that stretch reads LLGPEWDLYLMTIIALLLGTVIAYRQRQHQDIPVPRPPGPRPAPPQQEGPPEQQPPQ. Residues 735-755 traverse the membrane as a helical segment; that stretch reads LGPEWDLYLMTIIALLLGTVI. The Cytoplasmic portion of the chain corresponds to 756–790; it reads AYRQRQHQDIPVPRPPGPRPAPPQQEGPPEQQPPQ. The tract at residues 763-790 is disordered; that stretch reads QDIPVPRPPGPRPAPPQQEGPPEQQPPQ. Positions 767–790 are enriched in pro residues; that stretch reads VPRPPGPRPAPPQQEGPPEQQPPQ.

This sequence belongs to the sel-1 family. In terms of assembly, homodimer and homooligomer. May form a complex with ERLEC1, HSPA5, OS9, and SYVN1. Interacts with FOXRED2 and EDEM1. Interacts with LPL and LMF1; may stabilize the complex formed by LPL and LMF1 and thereby promote the export of LPL dimers. Component of the HRD1 complex, which comprises at least SYNV1/HRD1, DERL1/2, FAM8A1, HERPUD1/HERP, OS9, SEL1L and UBE2J1. SYNV1 assembles with SEL1L and FAM8A1 through its transmembrane domains, but interaction with its cytoplasmic domain is required to confer stability to FAM8A1 and enhance recruitment of HERPUD1. The interaction with SYNV1/HRD1 is direct. Post-translationally, N-glycosylated. In terms of tissue distribution, highly expressed in pancreas, white adipose tissue, liver and spleen (at protein level). Detected in heart, brain, spleen, lung, liver, kidney and testis.

It is found in the endoplasmic reticulum membrane. Plays a role in the endoplasmic reticulum quality control (ERQC) system also called ER-associated degradation (ERAD) involved in ubiquitin-dependent degradation of misfolded endoplasmic reticulum proteins. Enhances SYVN1 stability. Plays a role in LPL maturation and secretion. Required for normal differentiation of the pancreas epithelium, and for normal exocrine function and survival of pancreatic cells. May play a role in Notch signaling. This Mus musculus (Mouse) protein is Protein sel-1 homolog 1 (Sel1l).